The chain runs to 181 residues: Adenine phosphoribosyltransferase (181 aa).

It belongs to the purine/pyrimidine phosphoribosyltransferase family. Homodimer.

The protein localises to the cytoplasm. The catalysed reaction is AMP + diphosphate = 5-phospho-alpha-D-ribose 1-diphosphate + adenine. It functions in the pathway purine metabolism; AMP biosynthesis via salvage pathway; AMP from adenine: step 1/1. Functionally, catalyzes a salvage reaction resulting in the formation of AMP, that is energically less costly than de novo synthesis. This Methylobacterium nodulans (strain LMG 21967 / CNCM I-2342 / ORS 2060) protein is Adenine phosphoribosyltransferase.